A 266-amino-acid polypeptide reads, in one-letter code: Metallo-beta-lactamase VIM-2 (266 aa).

A signal peptide spans 1 to 20 (MFKLLSKLLVYLTASIMAIA). Zn(2+) contacts are provided by H114, H116, and C198.

This sequence belongs to the metallo-beta-lactamase superfamily. Class-B beta-lactamase family. Monomer. Requires Zn(2+) as cofactor.

Its subcellular location is the periplasm. It carries out the reaction a beta-lactam + H2O = a substituted beta-amino acid. Inhibited by chelating agents such as EDTA. Inhibited by a fungal natural product, aspergillomarasmine A (AMA). Inhibited by 2-triazolylthioacetamides. In terms of biological role, class B beta-lactamase which confers resistance to the beta-lactam antibiotics, including penicillins, cephalosporins and carbapenems. Acts via hydrolysis of the beta-lactam ring. Has penicillin-, cephalosporin- and carbapenem-hydrolyzing activities. The polypeptide is Metallo-beta-lactamase VIM-2 (Escherichia coli).